The chain runs to 217 residues: MSENNEFDIADLRRDYVRGGLRRRDLTTNPLDLFERWLRQACDARLADPTAMCVATVDKSGQPHQRIVLLKHYDAQGMVFYTNLGSNKAQQLEENPRISLHFPWHMLDRQVSITGTAHRLTALEVMKYFHSRPKDSQIAAWVSHQSARISTRGILESKFLELKQKFLQGEIPLPSFWGGYRVSLETIEFWQGRESRLHDRFLYQRDGDGWQIDRLAP.

Substrate contacts are provided by residues 13-16 (RRDY) and Lys-71. Residues 66–71 (RIVLLK), 81–82 (YT), Lys-88, and Gln-110 contribute to the FMN site. Tyr-128, Arg-132, and Ser-136 together coordinate substrate. FMN is bound by residues 145–146 (QS) and Trp-190. 196–198 (RLH) provides a ligand contact to substrate. Arg-200 contributes to the FMN binding site.

Belongs to the pyridoxamine 5'-phosphate oxidase family. In terms of assembly, homodimer. FMN serves as cofactor.

The enzyme catalyses pyridoxamine 5'-phosphate + O2 + H2O = pyridoxal 5'-phosphate + H2O2 + NH4(+). The catalysed reaction is pyridoxine 5'-phosphate + O2 = pyridoxal 5'-phosphate + H2O2. Its pathway is cofactor metabolism; pyridoxal 5'-phosphate salvage; pyridoxal 5'-phosphate from pyridoxamine 5'-phosphate: step 1/1. It participates in cofactor metabolism; pyridoxal 5'-phosphate salvage; pyridoxal 5'-phosphate from pyridoxine 5'-phosphate: step 1/1. In terms of biological role, catalyzes the oxidation of either pyridoxine 5'-phosphate (PNP) or pyridoxamine 5'-phosphate (PMP) into pyridoxal 5'-phosphate (PLP). This is Pyridoxine/pyridoxamine 5'-phosphate oxidase from Edwardsiella ictaluri (strain 93-146).